A 597-amino-acid polypeptide reads, in one-letter code: Protein kinase C-like 3 (597 aa).

The 84-residue stretch at 12–95 (DIKLKTRFHG…AELNIHVFVG (84 aa)) folds into the PB1 domain. Residues 127–177 (GHRFQGKRLNRRIQCFICHDYIWGIGRQGFRCVDCRLCVHKKCHRHVRTHC) form a Phorbol-ester/DAG-type zinc finger. The disordered stretch occupies residues 181–238 (PQGPNVPVAPSSGVGSLRGGRLDTSSSTTRSGGGIDNGAFHEHEIESPGSAKDMSRST). The Protein kinase domain occupies 253–522 (FRLLTVIGRG…LNDMKEHDFF (270 aa)). Residues 259–267 (IGRGSYAKV) and lysine 282 contribute to the ATP site. Aspartate 377 (proton acceptor) is an active-site residue. One can recognise an AGC-kinase C-terminal domain in the interval 524 to 595 (GFIDWEALEQ…VNPLQMSRED (72 aa)).

The protein belongs to the protein kinase superfamily. AGC Ser/Thr protein kinase family. PKC subfamily. Interaction with par-3 required for the peripheral localization of par-6 and to form a par-3/par-6/pkc-3 complex, which is activated when cdc-42 interacts with par-6. Binds avidly to the phosphotyrosine interaction domain (PID) of a novel pkc-3 adapter protein num-1, which enables tethering and targeting of pkc-3 to the cell periphery. It depends on Mg(2+) as a cofactor.

The protein localises to the cytoplasm. It is found in the cytoskeleton. It catalyses the reaction L-seryl-[protein] + ATP = O-phospho-L-seryl-[protein] + ADP + H(+). The enzyme catalyses L-threonyl-[protein] + ATP = O-phospho-L-threonyl-[protein] + ADP + H(+). In terms of biological role, required for the normal progression of embryogenesis and viability of the organism. Plays an indispensable role in establishing embryonic polarity and in recruiting and maintaining par-6 to the periphery, through interaction with par-3. Required for epithelial cell polarity in the distal spermatheca. Phosphorylates serine residues of num-1. Required for the expression of antimicrobial peptide nlp-29 in response in response to fungal infection or physical injury. The polypeptide is Protein kinase C-like 3 (Caenorhabditis briggsae).